Reading from the N-terminus, the 322-residue chain is Retinal homeobox protein Rx-A (322 aa).

The short motif at 32-39 (HSIEAILG) is the Octapeptide motif element. A compositionally biased stretch (basic and acidic residues) spans 75–87 (TEEIHPQQEHLED). The tract at residues 75–136 (TEEIHPQQEH…KKKHRRNRTT (62 aa)) is disordered. A compositionally biased stretch (polar residues) spans 100 to 117 (KTSSECLSPGLSTSNSDN). Positions 130–189 (HRRNRTTFTTYQLHELERAFEKSHYPDVYSREELAMKVNLPEVRVQVWFQNRRAKWRRQE) form a DNA-binding region, homeobox. The OAR motif lies at 302 to 315 (NSIASLRMKAKEHI). The Nuclear localization signal motif lies at 308-312 (RMKAK).

Belongs to the paired homeobox family. Bicoid subfamily. Highly expressed in anterior neural plate followed by neural retina, pigmented epithelium, in pineal gland, diencephalon floor and epiphysis. At later stages, the neuroretina remains the primary site of expression. No expression in the developing lens and cornea.

The protein localises to the nucleus. Functionally, plays a critical role in eye formation by regulating the initial specification of retinal cells and/or their subsequent proliferation. This chain is Retinal homeobox protein Rx-A (rax-a), found in Xenopus laevis (African clawed frog).